The chain runs to 455 residues: Phosphoglucosamine mutase (455 aa).

The active-site Phosphoserine intermediate is Ser102. Mg(2+)-binding residues include Ser102, Asp241, Asp243, and Asp245. The residue at position 102 (Ser102) is a Phosphoserine.

It belongs to the phosphohexose mutase family. Mg(2+) serves as cofactor. Post-translationally, activated by phosphorylation.

The enzyme catalyses alpha-D-glucosamine 1-phosphate = D-glucosamine 6-phosphate. Catalyzes the conversion of glucosamine-6-phosphate to glucosamine-1-phosphate. The sequence is that of Phosphoglucosamine mutase from Legionella pneumophila (strain Paris).